The chain runs to 505 residues: Sucrose porin (505 aa).

An N-terminal signal peptide occupies residues 1 to 22 (MYKKRKLAILIALLTGTAAAHG). The segment at 44–94 (ETRASTAESRAASAEQKVQQLTQQQQQTQATTQQVARRTTQLEEKAERPGG) is disordered. Positions 46-82 (RASTAESRAASAEQKVQQLTQQQQQTQATTQQVARRT) are enriched in low complexity. Positions 83–93 (TQLEEKAERPG) are enriched in basic and acidic residues.

Belongs to the porin LamB (TC 1.B.3) family. Homotrimer.

It is found in the cell outer membrane. In terms of biological role, porin for sucrose uptake. This is Sucrose porin (scrY) from Klebsiella pneumoniae.